A 498-amino-acid polypeptide reads, in one-letter code: Acetyl-coenzyme A carboxylase carboxyl transferase subunit beta, chloroplastic (498 aa).

Residues 36 to 59 are disordered; the sequence is SVNEDPIINDMDKDIPSGSDSDNS. In terms of domain architecture, CoA carboxyltransferase N-terminal spans 231 to 498; the sequence is LWVQCENCYG…FFPLNQNSIK (268 aa). Zn(2+)-binding residues include C235, C238, C254, and C257. A C4-type zinc finger spans residues 235–257; it reads CENCYGLNYKRFLKSKMNICEHC.

This sequence belongs to the AccD/PCCB family. Acetyl-CoA carboxylase is a heterohexamer composed of biotin carboxyl carrier protein, biotin carboxylase and 2 subunits each of ACCase subunit alpha and ACCase plastid-coded subunit beta (accD). Zn(2+) is required as a cofactor.

Its subcellular location is the plastid. The protein localises to the chloroplast stroma. The enzyme catalyses N(6)-carboxybiotinyl-L-lysyl-[protein] + acetyl-CoA = N(6)-biotinyl-L-lysyl-[protein] + malonyl-CoA. It functions in the pathway lipid metabolism; malonyl-CoA biosynthesis; malonyl-CoA from acetyl-CoA: step 1/1. Functionally, component of the acetyl coenzyme A carboxylase (ACC) complex. Biotin carboxylase (BC) catalyzes the carboxylation of biotin on its carrier protein (BCCP) and then the CO(2) group is transferred by the transcarboxylase to acetyl-CoA to form malonyl-CoA. The polypeptide is Acetyl-coenzyme A carboxylase carboxyl transferase subunit beta, chloroplastic (Morus indica (Mulberry)).